The following is a 700-amino-acid chain: Non-hemolytic phospholipase C (700 aa).

A signal peptide (tat-type signal) is located at residues 1-34 (MTNQNRRDFLRLAAGTAGAAALQLFPPVIREALA).

The protein belongs to the bacterial phospholipase C family. Post-translationally, predicted to be exported by the Tat system. The position of the signal peptide cleavage has not been experimentally proven.

It carries out the reaction a 1,2-diacyl-sn-glycero-3-phosphocholine + H2O = phosphocholine + a 1,2-diacyl-sn-glycerol + H(+). Hydrolyzes phosphatidylserine as well as phosphatidylcholine. This Burkholderia pseudomallei (strain K96243) protein is Non-hemolytic phospholipase C (plcN).